The following is a 526-amino-acid chain: MGNTYGLEGLGLINPGNIYRNLPVARLVEMALARGEGVLASNGALSVRTGKYTGRSPNDRFMVDTPSVHDTISWGAVNQPLEEARFEALFRRLAAYLQGRDLFIFDGFVGADPAYRMPIRVVNQYAWQNLFVHQLFVRPSAAELEAHEPQFTVICAPGFQATPEVDGTRSEAFVVLNFDRRLIIIGGTSYAGEMKKSIFTVMNYLLPERGVCPMHCSANMGPAGDTALFFGLSGTGKTTLSADPERRLIGDDEHGWSDHGIFNFEGGCYAKCIKLSAEHEPQIWNAIRFGSVLENVAVDPDSRAIDYDCDALTENTRAAYPVDFIPNAVIPGIGGHPRTVVFLTADAFGVMPPIAKLTREQAMYHFLSGYTSKLAGTERGITDPQATFSTCFGAPFLPRSPRVYADLLGERIAKHGASVYLVNTGWTGGPSGIGRRMSLPYTRAMVRAAIKGELEGVEFVPDPVFGILVPTSCPGVPAEVLNPRHTWQDKEKYDAMARKLAGLFAENFTKFRDVPEEIRAAGPVVR.

Substrate contacts are provided by Arg55, Tyr190, and Lys196. ATP contacts are provided by residues Lys196, His215, and 231-239 (GLSGTGKTT). Residues Lys196 and His215 each contribute to the Mn(2+) site. Asp252 contributes to the Mn(2+) binding site. Positions 280, 317, and 442 each coordinate ATP. Residue Arg317 participates in substrate binding.

This sequence belongs to the phosphoenolpyruvate carboxykinase (ATP) family. The cofactor is Mn(2+).

It localises to the cytoplasm. It carries out the reaction oxaloacetate + ATP = phosphoenolpyruvate + ADP + CO2. Its pathway is carbohydrate biosynthesis; gluconeogenesis. Functionally, involved in the gluconeogenesis. Catalyzes the conversion of oxaloacetate (OAA) to phosphoenolpyruvate (PEP) through direct phosphoryl transfer between the nucleoside triphosphate and OAA. This chain is Phosphoenolpyruvate carboxykinase (ATP) 2, found in Moorella thermoacetica (strain ATCC 39073 / JCM 9320).